We begin with the raw amino-acid sequence, 281 residues long: MRCIRAAPADDGPYTPIIMSPVFPCCFCQGEAVFPSNRASCKHVFCFFCTPRECPECGSGGGRKLIPNEYLYALTAKPFPPAPMGRTAGFWLMGPNGGWHVEPRVVVLEDLLTAVIITVGALVETRGAPEGAVRVRARGKWEGAIALPLPLLDDLVELGGAIEAAGGKVAVGGFLVRTLYELVVRYHDTLAKTFPVMAPRFGSLGALKELLSRFRIPGYFGSGTPRYDGLLGHIACEIRKCCDPPGIGFPNPFRAFLNRKNRHKRTGGATGSPFTDPPTGH.

The sequence is that of Putative zinc-binding protein ORF11 (ORF11) from Ictaluridae (bullhead catfishes).